The primary structure comprises 66 residues: ATP synthase subunit c (66 aa).

Transmembrane regions (helical) follow at residues 3–23 (LTFFGLCLACMGVSLAEGMLM) and 45–65 (IMGIAFIEGTFLVTLVFSFVI).

It belongs to the ATPase C chain family. In terms of assembly, F-type ATPases have 2 components, F(1) - the catalytic core - and F(0) - the membrane proton channel. F(1) has five subunits: alpha(3), beta(3), gamma(1), delta(1), epsilon(1). F(0) has three main subunits: a(1), b(2) and c(10-14). The alpha and beta chains form an alternating ring which encloses part of the gamma chain. F(1) is attached to F(0) by a central stalk formed by the gamma and epsilon chains, while a peripheral stalk is formed by the delta and b chains.

Its subcellular location is the cell membrane. Functionally, f(1)F(0) ATP synthase produces ATP from ADP in the presence of a proton or sodium gradient. F-type ATPases consist of two structural domains, F(1) containing the extramembraneous catalytic core and F(0) containing the membrane proton channel, linked together by a central stalk and a peripheral stalk. During catalysis, ATP synthesis in the catalytic domain of F(1) is coupled via a rotary mechanism of the central stalk subunits to proton translocation. Its function is as follows. Key component of the F(0) channel; it plays a direct role in translocation across the membrane. A homomeric c-ring of between 10-14 subunits forms the central stalk rotor element with the F(1) delta and epsilon subunits. The protein is ATP synthase subunit c (atpE) of Streptococcus oralis.